The primary structure comprises 663 residues: Rap1 GTPase-activating protein 1 (663 aa).

Positions 1–17 (MIEKMQGSRMDEQRCSF) constitute a GoLoco domain. Residues 1 to 23 (MIEKMQGSRMDEQRCSFPPPLKT) are disordered. Position 17 is a phosphoserine (F17). Residues 181 to 397 (IVTFDEHVIS…RTRAALLETL (217 aa)) enclose the Rap-GAP domain. Phosphoserine is present on S441. Disordered regions lie at residues 442-604 (MDAM…PHKR) and 616-645 (SVST…PACP). A compositionally biased stretch (polar residues) spans 450 to 465 (KKPNTVSTSHSGSFAP). S484, S499, S515, S541, and S542 each carry phosphoserine. Polar residues predominate over residues 535 to 549 (ENSSTQSSPEMPTTK). A compositionally biased stretch (low complexity) spans 567–579 (RSSSSASSFASVV). A compositionally biased stretch (acidic residues) spans 580-591 (EETEGVDGEDTG). The segment covering 616 to 630 (SVSTTSGGSSPGPSR) has biased composition (low complexity).

As to quaternary structure, homodimer and heterodimer with RAP1B. In terms of tissue distribution, significant expression seen in the brain, kidney and pancreas. Abundant in the cerebral cortex and expressed at much lower levels in the spinal cord. Not detected in the lymphoid tissues.

The protein localises to the golgi apparatus membrane. Its function is as follows. GTPase activator for the nuclear Ras-related regulatory protein RAP-1A (KREV-1), converting it to the putatively inactive GDP-bound state. The polypeptide is Rap1 GTPase-activating protein 1 (RAP1GAP) (Homo sapiens (Human)).